Here is a 1749-residue protein sequence, read N- to C-terminus: E3 ubiquitin-protein ligase UBR1 (1749 aa).

N-acetylalanine is present on Ala2. A Phosphothreonine modification is found at Thr21. The UBR-type zinc-finger motif lies at 97 to 168; that stretch reads QLCGRVFKSG…TGPFCVNHEP (72 aa). Residues Cys99, Cys112, Cys115, Cys124, Cys127, His133, and His136 each coordinate Zn(2+). An a peptide-binding site is contributed by Phe148. A Zn(2+)-binding site is contributed by Cys149. Asp150 serves as a coordination point for a peptide. Cys151 provides a ligand contact to Zn(2+). Asp153 is a binding site for a peptide. Zn(2+) is bound by residues Cys163 and His166. The tract at residues 842–868 is disordered; the sequence is QHSKAEHMQKKRRKQENKDEALPPPPP. The tract at residues 1019 to 1054 is UBC2-binding region (U2BR); it reads RKRKAEAARLHRQKIMAQMSALQKNFIETHKLMYDN. Zn(2+)-binding residues include Cys1098, Cys1101, Cys1159, His1161, His1164, and Cys1167. Residues 1098–1201 form an RING-type; atypical zinc finger; sequence CILCQEEQEV…SGEYLCPLCK (104 aa). Position 1179 is a phosphoserine (Ser1179). Cys1197, Cys1200, Cys1627, Cys1630, and Cys1653 together coordinate Zn(2+).

The protein belongs to the E3 ubiquitin-protein ligase UBR1-like family. In terms of assembly, interacts with RECQL4. As to expression, broadly expressed, with highest levels in skeletal muscle, kidney and pancreas. Present in acinar cells of the pancreas (at protein level).

The protein resides in the cytoplasm. It localises to the cytosol. The enzyme catalyses S-ubiquitinyl-[E2 ubiquitin-conjugating enzyme]-L-cysteine + [acceptor protein]-L-lysine = [E2 ubiquitin-conjugating enzyme]-L-cysteine + N(6)-ubiquitinyl-[acceptor protein]-L-lysine.. The protein operates within protein modification; protein ubiquitination. With respect to regulation, inhibited by the small-molecule compound RF-C11, which bears two heterovalent ligands: RF-C11 inhibits activity toward both type-1 and type-2 N-degrons. E3 ubiquitin-protein ligase which is a component of the N-end rule pathway. Recognizes and binds proteins bearing specific N-terminal residues that are destabilizing according to the N-end rule, leading to their ubiquitination and subsequent degradation. Recognizes both type-1 and type-2 N-degrons, containing positively charged amino acids (Arg, Lys and His) and bulky and hydrophobic amino acids, respectively. Does not ubiquitinate proteins that are acetylated at the N-terminus. In contrast, it strongly binds methylated N-degrons. Binds leucine and is a negative regulator of the leucine-mTOR signaling pathway, thereby controlling cell growth. This Homo sapiens (Human) protein is E3 ubiquitin-protein ligase UBR1.